Here is a 246-residue protein sequence, read N- to C-terminus: E3 ubiquitin-protein ligase MARCHF2 (246 aa).

The segment at 56-116 (DSQSDCPFCR…ELCHTEFAVE (61 aa)) adopts an RING-CH-type zinc-finger fold. Zn(2+) is bound by residues Cys-64, Cys-67, Cys-80, Cys-82, His-90, Cys-93, Cys-106, and Cys-109. The required for interaction with IKBKG stretch occupies residues 121-246 (PLTEWLKDPG…LKKVAEETPV (126 aa)). The next 2 helical transmembrane spans lie at 138-158 (LCCD…SGWL) and 175-195 (AVGL…WTLV).

In terms of assembly, interacts with STX6; the interaction promotes MARCHF2-mediated ubiquitination and degradation of CFTR. Interacts with MARCHF3. Interacts with GOPC/CAL; the interaction leads to CFTR ubiquitination and degradation. Interacts with CFTR; the interaction leads to CFTR ubiqtuitination and degradation. Interacts (via PDZ domain) with DLG1 (via PDZ domains); the interaction leads to DLG1 ubiqtuitination and degradation. Interacts with ERGIC3. Interacts with ADRB2. Interacts with IKBKG/NEMO; during the late stages of macrophage viral and bacterial infection; the interaction leads to ubiquitination and degradation of IKBKG/NEMO.

It localises to the endoplasmic reticulum membrane. The protein resides in the lysosome membrane. The protein localises to the endosome membrane. Its subcellular location is the golgi apparatus membrane. It is found in the cytoplasm. It localises to the cell membrane. The enzyme catalyses S-ubiquitinyl-[E2 ubiquitin-conjugating enzyme]-L-cysteine + [acceptor protein]-L-lysine = [E2 ubiquitin-conjugating enzyme]-L-cysteine + N(6)-ubiquitinyl-[acceptor protein]-L-lysine.. The protein operates within protein modification; protein ubiquitination. Its function is as follows. E3 ubiquitin-protein ligase that may mediate ubiquitination of TFRC and CD86, and promote their subsequent endocytosis and sorting to lysosomes via multivesicular bodies. E3 ubiquitin ligases accept ubiquitin from an E2 ubiquitin-conjugating enzyme in the form of a thioester and then directly transfer the ubiquitin to targeted substrates. Together with GOPC/CAL mediates the ubiquitination and lysosomal degradation of CFTR. Ubiquitinates and therefore mediates the degradation of DLG1. Regulates the intracellular trafficking and secretion of alpha1-antitrypsin/SERPINA1 and HP/haptoglobin via ubiquitination and degradation of the cargo receptor ERGIC3. Negatively regulates the antiviral and antibacterial immune response by repression of the NF-kB and type 1 IFN signaling pathways, via MARCHF2-mediated K48-linked polyubiquitination of IKBKG/NEMO, resulting in its proteasomal degradation. May be involved in endosomal trafficking through interaction with STX6. The chain is E3 ubiquitin-protein ligase MARCHF2 (Marchf2) from Mus musculus (Mouse).